The chain runs to 212 residues: Pyridoxine/pyridoxamine 5'-phosphate oxidase (212 aa).

Substrate-binding positions include 9–12 and K67; that span reads RKSY. FMN-binding positions include 62–67, 77–78, R83, and K84; these read RIVLIK and FT. Positions 124, 128, and 132 each coordinate substrate. FMN-binding positions include 141–142 and W185; that span reads QS. 191-193 provides a ligand contact to substrate; it reads RLH. R195 is an FMN binding site.

This sequence belongs to the pyridoxamine 5'-phosphate oxidase family. Homodimer. Requires FMN as cofactor.

It carries out the reaction pyridoxamine 5'-phosphate + O2 + H2O = pyridoxal 5'-phosphate + H2O2 + NH4(+). It catalyses the reaction pyridoxine 5'-phosphate + O2 = pyridoxal 5'-phosphate + H2O2. It functions in the pathway cofactor metabolism; pyridoxal 5'-phosphate salvage; pyridoxal 5'-phosphate from pyridoxamine 5'-phosphate: step 1/1. Its pathway is cofactor metabolism; pyridoxal 5'-phosphate salvage; pyridoxal 5'-phosphate from pyridoxine 5'-phosphate: step 1/1. Catalyzes the oxidation of either pyridoxine 5'-phosphate (PNP) or pyridoxamine 5'-phosphate (PMP) into pyridoxal 5'-phosphate (PLP). This chain is Pyridoxine/pyridoxamine 5'-phosphate oxidase, found in Verminephrobacter eiseniae (strain EF01-2).